The sequence spans 173 residues: Endoribonuclease YbeY (173 aa).

Zn(2+) contacts are provided by His120, His124, and His130.

It belongs to the endoribonuclease YbeY family. Requires Zn(2+) as cofactor.

The protein resides in the cytoplasm. Functionally, single strand-specific metallo-endoribonuclease involved in late-stage 70S ribosome quality control and in maturation of the 3' terminus of the 16S rRNA. The protein is Endoribonuclease YbeY of Kineococcus radiotolerans (strain ATCC BAA-149 / DSM 14245 / SRS30216).